The primary structure comprises 574 residues: Sulfate adenylyltransferase (574 aa).

The tract at residues 1–169 (MANPPHGGVL…IEAINKLNHY (169 aa)) is N-terminal. Residues 170-394 (DYVALRYTPA…LRESSPPRHT (225 aa)) are catalytic. Residue Gln197 participates in sulfate binding. Residues 197-200 (QTRN) and 291-294 (GRDH) each bind ATP. Residues Thr198, Arg199, and Asn200 contribute to the active site. A sulfate-binding site is contributed by Arg199. Position 295 (Ala295) interacts with sulfate. Val333 contacts ATP. The segment at 395–574 (QGFTIFLTGY…LETEGFFDRS (180 aa)) is allosteric regulation domain; adenylyl-sulfate kinase-like. Residues 434–437 (DTVR), Arg451, 477–478 (IA), and Arg516 contribute to the 3'-phosphoadenylyl sulfate site.

In the N-terminal section; belongs to the sulfate adenylyltransferase family. It in the C-terminal section; belongs to the APS kinase family. Homohexamer. Dimer of trimers.

Its subcellular location is the cytoplasm. It carries out the reaction sulfate + ATP + H(+) = adenosine 5'-phosphosulfate + diphosphate. It participates in sulfur metabolism; hydrogen sulfide biosynthesis; sulfite from sulfate: step 1/3. Allosterically inhibited by 3'-phosphoadenosine 5'-phosphosulfate (PAPS). Functionally, catalyzes the first intracellular reaction of sulfate assimilation, forming adenosine-5'-phosphosulfate (APS) from inorganic sulfate and ATP. Plays an important role in sulfate activation as a component of the biosynthesis pathway of sulfur-containing amino acids. The chain is Sulfate adenylyltransferase from Neosartorya fischeri (strain ATCC 1020 / DSM 3700 / CBS 544.65 / FGSC A1164 / JCM 1740 / NRRL 181 / WB 181) (Aspergillus fischerianus).